Here is a 125-residue protein sequence, read N- to C-terminus: MAFPNTSAQQAETNRKILEEIQTKKQLLAGGIINLGLSNTNQMPAPQLLGQPTTTTATPDLVSTNSTPPRAAFNPTSSTTLGFFIPQDSYFGNSLIPVLPRLELPATPSTTTPPITPIANANNPK.

Disordered regions lie at residues 44 to 73 (PAPQ…RAAF) and 105 to 125 (PATP…NNPK).

This sequence belongs to the SOSS-C family.

The sequence is that of SOSS complex subunit C homolog B from Drosophila willistoni (Fruit fly).